Here is a 224-residue protein sequence, read N- to C-terminus: Large ribosomal subunit protein uL3 (224 aa).

Glutamine 159 carries the post-translational modification N5-methylglutamine.

The protein belongs to the universal ribosomal protein uL3 family. Part of the 50S ribosomal subunit. Forms a cluster with proteins L14 and L19. Methylated by PrmB.

In terms of biological role, one of the primary rRNA binding proteins, it binds directly near the 3'-end of the 23S rRNA, where it nucleates assembly of the 50S subunit. The sequence is that of Large ribosomal subunit protein uL3 from Herminiimonas arsenicoxydans.